A 200-amino-acid polypeptide reads, in one-letter code: Acyl-homoserine-lactone synthase (200 aa).

It belongs to the autoinducer synthase family.

It carries out the reaction a fatty acyl-[ACP] + S-adenosyl-L-methionine = an N-acyl-L-homoserine lactone + S-methyl-5'-thioadenosine + holo-[ACP] + H(+). Required for the synthesis of BHL (N-butanoyl-L-homoserine lactone). This chain is Acyl-homoserine-lactone synthase (swrI), found in Serratia liquefaciens.